Consider the following 491-residue polypeptide: Glutamyl-tRNA(Gln) amidotransferase subunit A (491 aa).

Active-site charge relay system residues include K77 and S152. Catalysis depends on S176, which acts as the Acyl-ester intermediate.

This sequence belongs to the amidase family. GatA subfamily. As to quaternary structure, heterotrimer of A, B and C subunits.

The catalysed reaction is L-glutamyl-tRNA(Gln) + L-glutamine + ATP + H2O = L-glutaminyl-tRNA(Gln) + L-glutamate + ADP + phosphate + H(+). Allows the formation of correctly charged Gln-tRNA(Gln) through the transamidation of misacylated Glu-tRNA(Gln) in organisms which lack glutaminyl-tRNA synthetase. The reaction takes place in the presence of glutamine and ATP through an activated gamma-phospho-Glu-tRNA(Gln). This is Glutamyl-tRNA(Gln) amidotransferase subunit A from Chlamydia trachomatis serovar A (strain ATCC VR-571B / DSM 19440 / HAR-13).